Consider the following 97-residue polypeptide: RNA-binding protein Hfq (97 aa).

A Sm domain is found at 10–70; sequence DPFLNALRKE…ISTIVPARSV (61 aa). A disordered region spans residues 74–97; sequence HENRPQAAPTSTLVQVETVQQPAE. Positions 81-97 are enriched in polar residues; that stretch reads APTSTLVQVETVQQPAE.

Belongs to the Hfq family. As to quaternary structure, homohexamer.

RNA chaperone that binds small regulatory RNA (sRNAs) and mRNAs to facilitate mRNA translational regulation in response to envelope stress, environmental stress and changes in metabolite concentrations. Also binds with high specificity to tRNAs. This is RNA-binding protein Hfq from Neisseria meningitidis serogroup A / serotype 4A (strain DSM 15465 / Z2491).